A 238-amino-acid chain; its full sequence is Ribonuclease PH (238 aa).

Phosphate contacts are provided by residues R86 and 124–126; that span reads GTR.

The protein belongs to the RNase PH family. In terms of assembly, homohexameric ring arranged as a trimer of dimers.

The enzyme catalyses tRNA(n+1) + phosphate = tRNA(n) + a ribonucleoside 5'-diphosphate. Functionally, phosphorolytic 3'-5' exoribonuclease that plays an important role in tRNA 3'-end maturation. Removes nucleotide residues following the 3'-CCA terminus of tRNAs; can also add nucleotides to the ends of RNA molecules by using nucleoside diphosphates as substrates, but this may not be physiologically important. Probably plays a role in initiation of 16S rRNA degradation (leading to ribosome degradation) during starvation. This Serratia proteamaculans (strain 568) protein is Ribonuclease PH.